Here is a 225-residue protein sequence, read N- to C-terminus: Glutathione S-transferase U3 (225 aa).

The region spanning 6-86 (EGVKLIGSWA…YIDQTWTNNP (81 aa)) is the GST N-terminal domain. Residues 16–17 (SP), 43–44 (VK), 57–58 (KV), and 70–71 (ES) each bind glutathione. Positions 91 to 218 (SPYDKAMARF…EKHIEHMMKI (128 aa)) constitute a GST C-terminal domain. At T152 the chain carries Phosphothreonine.

Belongs to the GST superfamily. Tau family.

It localises to the cytoplasm. Its subcellular location is the cytosol. The catalysed reaction is RX + glutathione = an S-substituted glutathione + a halide anion + H(+). Its function is as follows. May be involved in the conjugation of reduced glutathione to a wide number of exogenous and endogenous hydrophobic electrophiles and have a detoxification role against certain herbicides. The polypeptide is Glutathione S-transferase U3 (GSTU3) (Arabidopsis thaliana (Mouse-ear cress)).